The sequence spans 101 residues: Small ribosomal subunit protein bS18c (101 aa).

The protein belongs to the bacterial ribosomal protein bS18 family. As to quaternary structure, part of the 30S ribosomal subunit.

The protein localises to the plastid. It localises to the chloroplast. This is Small ribosomal subunit protein bS18c from Citrus sinensis (Sweet orange).